Reading from the N-terminus, the 153-residue chain is MSKRNNVSYVKPAEPSFISKFKKDVCYKEGPTVDTKRQELPILSEDSDGSDKEDEQPQVVVLRKGDLSEEDVMKIKQQIKENTKDEEAAPSDGKILFKKPVKRLSGDTTSGVNACSTKKKKQEDTKESSGTKSSQKQVKNSSLLSFDDEDYDD.

2 disordered regions span residues 30–66 and 79–153; these read GPTVDTKRQELPILSEDSDGSDKEDEQPQVVVLRKGD and IKEN…DYDD. Over residues 45–56 the composition is skewed to acidic residues; it reads EDSDGSDKEDEQ. Polar residues-rich tracts occupy residues 106–116 and 130–144; these read GDTTSGVNACS and GTKSSQKQVKNSSLL.

This is an uncharacterized protein from Xenopus laevis (African clawed frog).